A 473-amino-acid chain; its full sequence is Kremen protein 1 (473 aa).

The first 19 residues, 1–19, serve as a signal peptide directing secretion; the sequence is MAPPAARLALLSAAALTLA. Residues 21–392 are Extracellular-facing; it reads RPAPSPGLGP…AGSHRVEGWT (372 aa). Residues 31 to 114 form the Kringle domain; that stretch reads ECFTANGADY…YWKYCEIPAC (84 aa). Disulfide bonds link Cys32/Cys114, Cys55/Cys95, Cys84/Cys109, Cys122/Cys186, Cys147/Cys167, Cys151/Cys169, Cys190/Cys198, and Cys214/Cys240. N-linked (GlcNAc...) asparagine glycans are attached at residues Asn45 and Asn59. Residues 116–210 form the WSC domain; it reads MPGNLGCYKD…DGRIILFDTL (95 aa). The CUB domain occupies 214-321; the sequence is CGGNYSAMSS…QGFAVLYQAV (108 aa). N-linked (GlcNAc...) asparagine glycosylation is found at Asn217, Asn293, Asn333, and Asn345. Residues 393-413 form a helical membrane-spanning segment; the sequence is VYGLATLLILTVTAIVAKILL. Residues 414 to 473 lie on the Cytoplasmic side of the membrane; sequence HVTFKSHRVPASGDLRDCHQPGTSGEIWSIFYKPSTSISIFKKKLKGQSQQDDRNPLVSD. The interval 414 to 473 is essential for apoptotic activity; sequence HVTFKSHRVPASGDLRDCHQPGTSGEIWSIFYKPSTSISIFKKKLKGQSQQDDRNPLVSD.

In terms of assembly, forms a ternary complex with DKK1 and LRP6. Interacts with LRP6 in a DKK1-dependent manner. Interacts with DKK1 and RSPO1 (via FU repeats).

It localises to the cell membrane. Receptor for Dickkopf proteins. Cooperates with DKK1/2 to inhibit Wnt/beta-catenin signaling by promoting the endocytosis of Wnt receptors LRP5 and LRP6. In the absence of DKK1, potentiates Wnt-beta-catenin signaling by maintaining LRP5 or LRP6 at the cell membrane. Can trigger apoptosis in a Wnt-independent manner and this apoptotic activity is inhibited upon binding of the ligand DKK1. Plays a role in limb development; attenuates Wnt signaling in the developing limb to allow normal limb patterning and can also negatively regulate bone formation. Modulates cell fate decisions in the developing cochlea with an inhibitory role in hair cell fate specification. This Homo sapiens (Human) protein is Kremen protein 1 (KREMEN1).